A 78-amino-acid chain; its full sequence is Large ribosomal subunit protein bL28 (78 aa).

The protein belongs to the bacterial ribosomal protein bL28 family.

The protein is Large ribosomal subunit protein bL28 of Rippkaea orientalis (strain PCC 8801 / RF-1) (Cyanothece sp. (strain PCC 8801)).